The primary structure comprises 591 residues: L-fucose isomerase (591 aa).

Catalysis depends on proton acceptor residues glutamate 337 and aspartate 361. Positions 337, 361, and 528 each coordinate Mn(2+).

The protein belongs to the L-fucose isomerase family. Homohexamer. It depends on Mn(2+) as a cofactor.

Its subcellular location is the cytoplasm. The enzyme catalyses L-fucose = L-fuculose. It functions in the pathway carbohydrate degradation; L-fucose degradation; L-lactaldehyde and glycerone phosphate from L-fucose: step 1/3. Functionally, converts the aldose L-fucose into the corresponding ketose L-fuculose. The polypeptide is L-fucose isomerase (Escherichia coli (strain ATCC 8739 / DSM 1576 / NBRC 3972 / NCIMB 8545 / WDCM 00012 / Crooks)).